The following is a 259-amino-acid chain: Dihydroorotate dehydrogenase B (NAD(+)), electron transfer subunit (259 aa).

An FAD-binding FR-type domain is found at 2–102 (MQKQNMIVVN…LGPLGHGFPV (101 aa)). FAD contacts are provided by residues 53-56 (RPIS), 70-72 (LYR), and 77-78 (GT). The [2Fe-2S] cluster site is built by C221, C226, C229, and C246.

This sequence belongs to the PyrK family. As to quaternary structure, heterotetramer of 2 PyrK and 2 PyrD type B subunits. Requires [2Fe-2S] cluster as cofactor. FAD serves as cofactor.

It participates in pyrimidine metabolism; UMP biosynthesis via de novo pathway; orotate from (S)-dihydroorotate (NAD(+) route): step 1/1. Its function is as follows. Responsible for channeling the electrons from the oxidation of dihydroorotate from the FMN redox center in the PyrD type B subunit to the ultimate electron acceptor NAD(+). The sequence is that of Dihydroorotate dehydrogenase B (NAD(+)), electron transfer subunit from Bacillus cereus (strain G9842).